A 147-amino-acid chain; its full sequence is MPRHSVFALSILALSITATVWIPTVQAETNLLRREFYGPVNPELFAAFLDDHDARGRENQRDFSSGSGTNELVDELSPVSERETLERFGKRNIDEIDRTAFDNFFKRNLDEIDRVGWSGFVKRLTNYLATTGHGTNTGGPVLTRRFG.

Positions 1 to 27 are cleaved as a signal peptide; it reads MPRHSVFALSILALSITATVWIPTVQA. Propeptides lie at residues 28 to 89 and 146 to 147; these read ETNL…ERFG and FG.

This sequence belongs to the orcokinin family.

It localises to the secreted. Myotropic peptides. The polypeptide is Orcokinin peptides (Apis mellifera (Honeybee)).